The sequence spans 341 residues: S-adenosylmethionine:tRNA ribosyltransferase-isomerase (341 aa).

It belongs to the QueA family. In terms of assembly, monomer.

Its subcellular location is the cytoplasm. The enzyme catalyses 7-aminomethyl-7-carbaguanosine(34) in tRNA + S-adenosyl-L-methionine = epoxyqueuosine(34) in tRNA + adenine + L-methionine + 2 H(+). It functions in the pathway tRNA modification; tRNA-queuosine biosynthesis. In terms of biological role, transfers and isomerizes the ribose moiety from AdoMet to the 7-aminomethyl group of 7-deazaguanine (preQ1-tRNA) to give epoxyqueuosine (oQ-tRNA). This is S-adenosylmethionine:tRNA ribosyltransferase-isomerase from Chlorobium luteolum (strain DSM 273 / BCRC 81028 / 2530) (Pelodictyon luteolum).